A 513-amino-acid polypeptide reads, in one-letter code: Maturase K (513 aa).

The protein belongs to the intron maturase 2 family. MatK subfamily.

The protein resides in the plastid. It is found in the chloroplast. In terms of biological role, usually encoded in the trnK tRNA gene intron. Probably assists in splicing its own and other chloroplast group II introns. This is Maturase K from Arundo donax (Giant reed).